Reading from the N-terminus, the 277-residue chain is NH(3)-dependent NAD(+) synthetase (277 aa).

36–43 (GLSGGIDS) serves as a coordination point for ATP. Aspartate 42 contacts Mg(2+). Residue arginine 118 participates in deamido-NAD(+) binding. Residue threonine 138 participates in ATP binding. A Mg(2+)-binding site is contributed by glutamate 143. Residues lysine 167 and serine 189 each coordinate ATP.

This sequence belongs to the NAD synthetase family. In terms of assembly, homodimer.

It carries out the reaction deamido-NAD(+) + NH4(+) + ATP = AMP + diphosphate + NAD(+) + H(+). It participates in cofactor biosynthesis; NAD(+) biosynthesis; NAD(+) from deamido-NAD(+) (ammonia route): step 1/1. In terms of biological role, catalyzes the ATP-dependent amidation of deamido-NAD to form NAD. Uses ammonia as a nitrogen source. This is NH(3)-dependent NAD(+) synthetase from Chlorobium phaeovibrioides (strain DSM 265 / 1930) (Prosthecochloris vibrioformis (strain DSM 265)).